The following is a 73-amino-acid chain: MPIWLGILVGVVALVAGVALGFFIARKYMMNYLQKNPPINEQMLKMMMMQMGQKPSQKKINQMMSAMNKQQMK.

A helical transmembrane segment spans residues 3-23 (IWLGILVGVVALVAGVALGFF).

This sequence belongs to the UPF0154 family.

The protein localises to the cell membrane. The chain is UPF0154 protein BCG9842_B1526 from Bacillus cereus (strain G9842).